The following is a 388-amino-acid chain: P2X purinoceptor 4 (388 aa).

The Cytoplasmic portion of the chain corresponds to methionine 1–arginine 33. Residues threonine 34–tyrosine 54 form a helical membrane-spanning segment. At glutamine 55–asparagine 338 the chain is on the extracellular side. ATP is bound by residues lysine 67 and lysine 69. The CTP site is built by lysine 67 and lysine 69. Residues asparagine 75, asparagine 110, asparagine 131, asparagine 153, and asparagine 184 are each glycosylated (N-linked (GlcNAc...) asparagine). Disulfide bonds link cysteine 116/cysteine 165, cysteine 126/cysteine 149, and cysteine 132/cysteine 159. ATP contacts are provided by threonine 186 and leucine 188. Residue threonine 186 coordinates CTP. Asparagine 199 and asparagine 208 each carry an N-linked (GlcNAc...) asparagine glycan. 2 cysteine pairs are disulfide-bonded: cysteine 217/cysteine 227 and cysteine 261/cysteine 270. Positions 293, 295, and 313 each coordinate ATP. The CTP site is built by asparagine 293, arginine 295, and lysine 313. Residues isoleucine 339–tyrosine 359 traverse the membrane as a helical segment. Residues cysteine 360–glutamine 388 are Cytoplasmic-facing.

Belongs to the P2X receptor family. As to quaternary structure, functional P2RXs are organized as homomeric and heteromeric trimers. Forms heterotrimer with P2RX1. Interacts with P2RX7 (via C-terminus); this interaction is functional only in the presence of ATP. Forms heterotrimer with P2RX4; functional differences between homomeric P2RX4 and P2RX4/6 heterotrimer are minor. Interacts with AP1M2.

The protein localises to the cell membrane. Its subcellular location is the lysosome membrane. The catalysed reaction is K(+)(in) = K(+)(out). It catalyses the reaction Na(+)(in) = Na(+)(out). The enzyme catalyses Ca(2+)(in) = Ca(2+)(out). With respect to regulation, activated by ATP. pH-dependent and inhibited by acidic pH. ATP-gated nonselective transmembrane cation channel permeable to potassium, sodium and calcium. CTP, but not GTP or UTP, functions as a weak affinity agonist for P2RX4. Activated by extracellularly released ATP, it plays multiple role in immunity and central nervous system physiology. Could also function as an ATP-gated cation channel of lysosomal membranes. The polypeptide is P2X purinoceptor 4 (P2RX4) (Bos taurus (Bovine)).